Here is a 344-residue protein sequence, read N- to C-terminus: uncharacterized protein (344 aa).

The tract at residues 304 to 344 (AVPAPTPRRPLDSVLQIRQTPEKGRNASDRNARETGWFSPP) is disordered. The segment covering 323-336 (TPEKGRNASDRNAR) has biased composition (basic and acidic residues).

This is an uncharacterized protein from Mycobacterium tuberculosis (strain CDC 1551 / Oshkosh).